We begin with the raw amino-acid sequence, 469 residues long: Abscisic acid 8'-hydroxylase CYP707A2 (469 aa).

Residues 3 to 23 form a helical membrane-spanning segment; the sequence is FVSMLCLFTFISLTLLLIHSI. C414 provides a ligand contact to heme.

It belongs to the cytochrome P450 family. It depends on heme as a cofactor. Expressed at low levels in fruit.

Its subcellular location is the membrane. The enzyme catalyses 2-cis-(+)-abscisate + reduced [NADPH--hemoprotein reductase] + O2 = (+)-8'-hydroxyabscisate + oxidized [NADPH--hemoprotein reductase] + H2O + H(+). It functions in the pathway plant hormone degradation; abscisic acid degradation. Its function is as follows. Negative regulator of fruit ripening involved in the oxidative degradation of abscisic acid (ABA). This Solanum lycopersicum (Tomato) protein is Abscisic acid 8'-hydroxylase CYP707A2.